Consider the following 173-residue polypeptide: Ribulose bisphosphate carboxylase small subunit, chloroplastic 2 (173 aa).

The N-terminal 33 residues, 1 to 33, are a transit peptide targeting the chloroplast; it reads VVLSKECAKPLATPKVTLNKRGFATTIATKNRE.

Belongs to the RuBisCO small chain family. In terms of assembly, heterohexadecamer of 8 large and 8 small subunits.

Its subcellular location is the plastid. The protein localises to the chloroplast. In terms of biological role, ruBisCO catalyzes two reactions: the carboxylation of D-ribulose 1,5-bisphosphate, the primary event in carbon dioxide fixation, as well as the oxidative fragmentation of the pentose substrate. Both reactions occur simultaneously and in competition at the same active site. Although the small subunit is not catalytic it is essential for maximal activity. This chain is Ribulose bisphosphate carboxylase small subunit, chloroplastic 2, found in Acetabularia acetabulum (Mermaid's wine glass).